A 549-amino-acid polypeptide reads, in one-letter code: Serine/threonine-protein phosphatase PPQ (549 aa).

Residues 1–13 (MRRSPSRSNNNFA) show a composition bias toward polar residues. 4 disordered regions span residues 1–50 (MRRS…RSLP), 64–85 (YNTL…DNLL), 133–158 (TSST…NYSS), and 189–219 (SRVK…PKSS). Low complexity-rich tracts occupy residues 16–32 (NCST…TTPS) and 68–83 (ASAG…SNDN). Residues 205 to 217 (APSSPTSGIPNPK) show a composition bias toward polar residues. 4 residues coordinate Mn(2+): Asp-301, His-303, Asp-329, and Asn-361. The active-site Proton donor is His-362. Mn(2+)-binding residues include His-410 and His-485.

It belongs to the PPP phosphatase family. PP-Z subfamily. Mn(2+) serves as cofactor.

The catalysed reaction is O-phospho-L-seryl-[protein] + H2O = L-seryl-[protein] + phosphate. It catalyses the reaction O-phospho-L-threonyl-[protein] + H2O = L-threonyl-[protein] + phosphate. Phosphatase involved in the regulation of protein synthesis. Affects translational accuracy. This Saccharomyces cerevisiae (strain ATCC 204508 / S288c) (Baker's yeast) protein is Serine/threonine-protein phosphatase PPQ (PPQ1).